The following is a 139-amino-acid chain: Large ribosomal subunit protein uL16 (139 aa).

Residues 1-17 (MLMPKRVKYRKSQRGRM) are compositionally biased toward basic residues. A disordered region spans residues 1-24 (MLMPKRVKYRKSQRGRMKGNSGRG).

The protein belongs to the universal ribosomal protein uL16 family. In terms of assembly, part of the 50S ribosomal subunit.

Binds 23S rRNA and is also seen to make contacts with the A and possibly P site tRNAs. This Chlorobium limicola (strain DSM 245 / NBRC 103803 / 6330) protein is Large ribosomal subunit protein uL16.